The primary structure comprises 210 residues: dTTP/UTP pyrophosphatase (210 aa).

Asp89 serves as the catalytic Proton acceptor.

It belongs to the Maf family. YhdE subfamily. It depends on a divalent metal cation as a cofactor.

The protein localises to the cytoplasm. It catalyses the reaction dTTP + H2O = dTMP + diphosphate + H(+). The catalysed reaction is UTP + H2O = UMP + diphosphate + H(+). In terms of biological role, nucleoside triphosphate pyrophosphatase that hydrolyzes dTTP and UTP. May have a dual role in cell division arrest and in preventing the incorporation of modified nucleotides into cellular nucleic acids. The polypeptide is dTTP/UTP pyrophosphatase (Burkholderia thailandensis (strain ATCC 700388 / DSM 13276 / CCUG 48851 / CIP 106301 / E264)).